Consider the following 141-residue polypeptide: Hemoglobin subunit alpha-D (141 aa).

Residues 1–141 (VLTAEDRRLL…VADVLCEKYR (141 aa)) enclose the Globin domain. Heme b contacts are provided by Gln58 and His87.

This sequence belongs to the globin family. As to quaternary structure, heterotetramer of two alpha chains and two beta chains. As to expression, red blood cells.

Functionally, involved in oxygen transport from the lung to the various peripheral tissues. This Drymarchon melanurus erebennus (Texas indigo snake) protein is Hemoglobin subunit alpha-D.